A 178-amino-acid chain; its full sequence is Ribosome maturation factor RimM (178 aa).

One can recognise a PRC barrel domain in the interval 93–170; sequence EGSYYYHELR…ALTADAPAGL (78 aa).

This sequence belongs to the RimM family. As to quaternary structure, binds ribosomal protein uS19.

It is found in the cytoplasm. Its function is as follows. An accessory protein needed during the final step in the assembly of 30S ribosomal subunit, possibly for assembly of the head region. Essential for efficient processing of 16S rRNA. May be needed both before and after RbfA during the maturation of 16S rRNA. It has affinity for free ribosomal 30S subunits but not for 70S ribosomes. The polypeptide is Ribosome maturation factor RimM (Deinococcus geothermalis (strain DSM 11300 / CIP 105573 / AG-3a)).